The following is a 366-amino-acid chain: MPDPRDLQLSSYDYPLPQERIAQVPAEPRHSARMLMVPPATQALEAARHGVVWDLLEELQPGDLLVVNNTRVLKARLKVRRSGGGLSELLVLEPRGEGRWLCLARPAKRMRPGDVLTIDGTSIGLTVLEDDAASGGRLVQFPTDCRDAETIETLLNQWGEVPLPPYIDRHDPDDVERYQTRYADRPGAVAAPTAGLHFSDELLAGLQLKGVELARITLHVGLGTFRPVETNDLTRLELHSEWVEVSAAVVEAIQRCRGRVIAVGTTSVRALEGAAQQNGGVLQPFTGPVNLVIQPGYRFAVVQGLMTNFHLPKSSLLLLVSALIGREKLLAIYTEAIERNYRFFSYGDAMWIAPEAVLSQAEPVGH.

It belongs to the QueA family. In terms of assembly, monomer.

It is found in the cytoplasm. It catalyses the reaction 7-aminomethyl-7-carbaguanosine(34) in tRNA + S-adenosyl-L-methionine = epoxyqueuosine(34) in tRNA + adenine + L-methionine + 2 H(+). It participates in tRNA modification; tRNA-queuosine biosynthesis. Transfers and isomerizes the ribose moiety from AdoMet to the 7-aminomethyl group of 7-deazaguanine (preQ1-tRNA) to give epoxyqueuosine (oQ-tRNA). This chain is S-adenosylmethionine:tRNA ribosyltransferase-isomerase, found in Parasynechococcus marenigrum (strain WH8102).